The primary structure comprises 87 residues: MANIKSAKKRALQSERRRQHNASRRSMTRTSLKKVLAAIASGDKASAQAAFAAATPLIDRMATKGLIHKNKAARHKSRLSAQIKALA.

A compositionally biased stretch (basic residues) spans Met-1–Met-27. Positions Met-1 to Ser-31 are disordered.

The protein belongs to the bacterial ribosomal protein bS20 family.

In terms of biological role, binds directly to 16S ribosomal RNA. This Pseudoalteromonas atlantica (strain T6c / ATCC BAA-1087) protein is Small ribosomal subunit protein bS20.